The following is a 4690-amino-acid chain: Nonribosomal peptide synthetase sidN (4690 aa).

Residues 238-656 (ARVRENPGRI…LGRLSSDQIK (419 aa)) are adenylation 1. In terms of domain architecture, Carrier 1 spans 779–856 (SSSIPMLQSV…DLDTKAQQAL (78 aa)). At Ser-816 the chain carries O-(pantetheine 4'-phosphoryl)serine. A condensation 1 region spans residues 925–1175 (PGGKAFIQHT…AFGNTMSGRF (251 aa)). Positions 1349-1760 (EFAQKSPNAI…GRKDDLVKIR (412 aa)) are adenylation 2. The Carrier 2 domain maps to 1889–1965 (PAWCIKHRPL…DLINHLSVKR (77 aa)). Ser-1926 is modified (O-(pantetheine 4'-phosphoryl)serine). Residues 2001–2285 (PTTVFQDGML…SERLLESQLV (285 aa)) are condensation 2. Residues 2464–2869 (TWAKTHPEWK…GRKDEQVKVR (406 aa)) are adenylation 3. A Carrier 3 domain is found at 3002–3079 (RDLTSIEKQI…ELGRMKNALK (78 aa)). An O-(pantetheine 4'-phosphoryl)serine modification is found at Ser-3040. Residues 3121 to 3530 (CMPLQEVLVA…QMESLVTSFT (410 aa)) form a condensation 3 region. A Carrier 4 domain is found at 3564–3637 (SVLEQQIRDV…KLATHIQTTS (74 aa)). Ser-3598 carries the O-(pantetheine 4'-phosphoryl)serine modification. A condensation 4 region spans residues 3679–4087 (VYPLTPLQAG…FESIRKHPDE (409 aa)). One can recognise a Carrier 5 domain in the interval 4119–4195 (SAIDQFLDPL…KLCEVAFAKS (77 aa)). Ser-4156 bears the O-(pantetheine 4'-phosphoryl)serine mark. Residues 4262–4589 (WVFKAENGLD…FNAHLNILWN (328 aa)) are condensation 5.

The protein belongs to the NRP synthetase family.

It participates in siderophore biosynthesis. Functionally, nonribosomal peptide synthetase required for the biosynthetis of epichloenin A, an extracellular siderophore that plays a crucial role in endophyte-grass symbioses. SidN assembles epichloenin A by activating and incorporating three trans-anhydromevalonylhydroxyornithine (trans-AMHO), 1 glutamine and 4 glycine moieties. Trans-AMHO is produced from L-ornithine via 2 steps involving a L-ornithine N(5)-monooxygenase and an AHMO-N(5)-transacylase that have still to be identified. The third adenylation domain (A3) of sidN incorporates the hydroxamate groups of the siderophore which forms an octahedral iron complex. The other component amino acids are assembled by sidN adenylation domains A1 and A2. The sequence is that of Nonribosomal peptide synthetase sidN from Epichloe festucae (strain E2368).